Reading from the N-terminus, the 191-residue chain is Programmed cell death protein 6 (191 aa).

An N-acetylalanine modification is found at alanine 2. EF-hand domains are found at residues 23–58 (PDQS…GTWT), 59–89 (PFNP…TGVW), 90–125 (KYIT…FGYR), 126–161 (LSDQ…LQRL), and 162–191 (TDIF…FSIV). Ca(2+) contacts are provided by aspartate 36, aspartate 38, serine 40, valine 42, and glutamate 47. Ca(2+)-binding residues include aspartate 103, aspartate 105, serine 107, methionine 109, and glutamate 114. Mg(2+) is bound by residues aspartate 169, aspartate 171, aspartate 173, and tryptophan 175.

As to quaternary structure, homodimer and heterodimer; heterodimerizes (via the EF-hand 5) with PEF1. Isoform 1 and isoform 2 self-associate; probably forming homodimers. Interacts with CPNE4 (via VWFA domain). Interacts with PDCD6IP; the interaction is calcium-dependent. Interacts with RBM22. Interacts with PLSCR4. Interacts with ANXA7 and TSG101. Interacts with DAPK1. Interacts with SEC31A; the interaction is calcium-dependent and promotes monoubiquitination of SEC31A. Interacts with ANXA11 (via N-terminus); the interaction is calcium-dependent. Interacts with PLSCR3 (via N-terminus); the interaction is calcium-dependent. Interacts with MCOLN1; the interaction is calcium-dependent. Interacts with KDR; the interaction is calcium-dependent. Interacts with HEBP2; the interaction is calcium-dependent. Interacts with TFG. Isoform 1: Interacts with SHISA5, leading to stabilize it. Isoform 2: Does not interact with SHISA5. Isoform 2: Does not interact with PDCD6IP, TSG101, ANXA7 and ANXA11.

The protein resides in the endoplasmic reticulum membrane. It localises to the cytoplasmic vesicle. It is found in the COPII-coated vesicle membrane. The protein localises to the cytoplasm. Its subcellular location is the nucleus. The protein resides in the endosome. Functionally, calcium sensor that plays a key role in processes such as endoplasmic reticulum (ER)-Golgi vesicular transport, endosomal biogenesis or membrane repair. Acts as an adapter that bridges unrelated proteins or stabilizes weak protein-protein complexes in response to calcium: calcium-binding triggers exposure of apolar surface, promoting interaction with different sets of proteins thanks to 3 different hydrophobic pockets, leading to translocation to membranes. Involved in ER-Golgi transport by promoting the association between PDCD6IP and TSG101, thereby bridging together the ESCRT-III and ESCRT-I complexes. Together with PEF1, acts as a calcium-dependent adapter for the BCR(KLHL12) complex, a complex involved in ER-Golgi transport by regulating the size of COPII coats. In response to cytosolic calcium increase, the heterodimer formed with PEF1 interacts with, and bridges together the BCR(KLHL12) complex and SEC31 (SEC31A or SEC31B), promoting monoubiquitination of SEC31 and subsequent collagen export, which is required for neural crest specification. Involved in the regulation of the distribution and function of MCOLN1 in the endosomal pathway. Promotes localization and polymerization of TFG at endoplasmic reticulum exit site. Required for T-cell receptor-, Fas-, and glucocorticoid-induced apoptosis. May mediate Ca(2+)-regulated signals along the death pathway: interaction with DAPK1 can accelerate apoptotic cell death by increasing caspase-3 activity. Its role in apoptosis may however be indirect, as suggested by knockout experiments. May inhibit KDR/VEGFR2-dependent angiogenesis; the function involves inhibition of VEGF-induced phosphorylation of the Akt signaling pathway. In case of infection by HIV-1 virus, indirectly inhibits HIV-1 production by affecting viral Gag expression and distribution. Has a lower Ca(2+) affinity than isoform 1. The chain is Programmed cell death protein 6 (PDCD6) from Homo sapiens (Human).